A 236-amino-acid polypeptide reads, in one-letter code: 5'-methylthioadenosine/S-adenosylhomocysteine nucleosidase (236 aa).

Residue Glu-12 is the Proton acceptor of the active site. Substrate is bound by residues Gly-78, Ile-153, and 174–175; that span reads ME. Catalysis depends on Asp-198, which acts as the Proton donor.

It belongs to the PNP/UDP phosphorylase family. MtnN subfamily.

It carries out the reaction S-adenosyl-L-homocysteine + H2O = S-(5-deoxy-D-ribos-5-yl)-L-homocysteine + adenine. It catalyses the reaction S-methyl-5'-thioadenosine + H2O = 5-(methylsulfanyl)-D-ribose + adenine. The enzyme catalyses 5'-deoxyadenosine + H2O = 5-deoxy-D-ribose + adenine. It participates in amino-acid biosynthesis; L-methionine biosynthesis via salvage pathway; S-methyl-5-thio-alpha-D-ribose 1-phosphate from S-methyl-5'-thioadenosine (hydrolase route): step 1/2. Catalyzes the irreversible cleavage of the glycosidic bond in both 5'-methylthioadenosine (MTA) and S-adenosylhomocysteine (SAH/AdoHcy) to adenine and the corresponding thioribose, 5'-methylthioribose and S-ribosylhomocysteine, respectively. Also cleaves 5'-deoxyadenosine, a toxic by-product of radical S-adenosylmethionine (SAM) enzymes, into 5-deoxyribose and adenine. In Shewanella oneidensis (strain ATCC 700550 / JCM 31522 / CIP 106686 / LMG 19005 / NCIMB 14063 / MR-1), this protein is 5'-methylthioadenosine/S-adenosylhomocysteine nucleosidase.